Consider the following 142-residue polypeptide: Ribosome maturation factor RimP (142 aa).

It belongs to the RimP family.

The protein resides in the cytoplasm. Functionally, required for maturation of 30S ribosomal subunits. In Wolinella succinogenes (strain ATCC 29543 / DSM 1740 / CCUG 13145 / JCM 31913 / LMG 7466 / NCTC 11488 / FDC 602W) (Vibrio succinogenes), this protein is Ribosome maturation factor RimP.